An 839-amino-acid chain; its full sequence is Phenylalanine--tRNA ligase beta subunit (839 aa).

One can recognise a tRNA-binding domain in the interval 42-166; sequence GELTGPIVIG…PPSVEGHQLV (125 aa). A B5 domain is found at 421-496; that stretch reads PEMPRQTINA…RKIGFDRIKA (76 aa). Residues Asp-474, Asp-480, Glu-483, and Glu-484 each coordinate Mg(2+). The region spanning 745 to 838 is the FDX-ACB domain; the sequence is SSFPVAKEDV…AEETCGAQLR (94 aa).

Belongs to the phenylalanyl-tRNA synthetase beta subunit family. Type 1 subfamily. In terms of assembly, tetramer of two alpha and two beta subunits. Requires Mg(2+) as cofactor.

Its subcellular location is the cytoplasm. It carries out the reaction tRNA(Phe) + L-phenylalanine + ATP = L-phenylalanyl-tRNA(Phe) + AMP + diphosphate + H(+). The protein is Phenylalanine--tRNA ligase beta subunit of Cutibacterium acnes (strain DSM 16379 / KPA171202) (Propionibacterium acnes).